The sequence spans 640 residues: Chaperone protein dnaK2 (640 aa).

Thr-197 carries the post-translational modification Phosphothreonine; by autocatalysis. Residues 605-640 (VYQSAQSSDGTGSSSSGGSGSGGDDEVIDAEFSETK) form a disordered region. Residues 627–640 (GDDEVIDAEFSETK) show a composition bias toward acidic residues.

It belongs to the heat shock protein 70 family.

Functionally, acts as a chaperone. The chain is Chaperone protein dnaK2 (dnaK2) from Thermosynechococcus vestitus (strain NIES-2133 / IAM M-273 / BP-1).